A 1945-amino-acid polypeptide reads, in one-letter code: Rho GTPase-activating protein 21 (1945 aa).

The segment at 26-53 (CEVSKNKDGKDQGEPVSPSEDEPFSWPG) is disordered. Over residues 29-38 (SKNKDGKDQG) the composition is skewed to basic and acidic residues. Residues Ser-42 and Ser-63 each carry the phosphoserine modification. Residues 56–165 (TVMLKRTSQG…TLELSVMPKD (110 aa)) enclose the PDZ domain. Disordered regions lie at residues 210-229 (TAQPVETCPPDSLPNKQQTS) and 326-365 (HQTTGSRSLEPSGILLKSGNYSGHSEGISSSRSQAVDSPP). The span at 347–358 (SGHSEGISSSRS) shows a compositional bias: low complexity. The residue at position 454 (Ser-454) is a Phosphoserine. Residues 499 to 512 (EATATVNSESQIPD) are compositionally biased toward polar residues. Residues 499–519 (EATATVNSESQIPDSNGERKQ) form a disordered region. An omega-N-methylarginine mark is found at Arg-549 and Arg-569. Disordered stretches follow at residues 573–647 (PVSQ…RPVN) and 674–702 (EVSSCLPGTSAKTSPQLSENLGTSDLELP). Positions 589–600 (SNRNFPTTTGVS) are enriched in polar residues. Phosphoserine is present on residues Ser-610 and Ser-619. The segment covering 674 to 696 (EVSSCLPGTSAKTSPQLSENLGT) has biased composition (polar residues). The residue at position 741 (Thr-741) is a Phosphothreonine. A phosphoserine mark is found at Ser-851, Ser-856, and Ser-875. Disordered stretches follow at residues 852 to 879 (HDQESVGPPSLDGQHSSKTERSKSYDEG) and 902 to 921 (ITDSQKSSEDSGSRKGSSSE). Residues 866 to 879 (HSSKTERSKSYDEG) show a composition bias toward basic and acidic residues. Tyr-876 is subject to Phosphotyrosine. Phosphoserine occurs at positions 918, 920, 948, 1093, and 1109. Positions 924–1091 (SDAAREGWLQ…AKSEPKTQSP (168 aa)) are interaction with ARF1 and ARF6. Positions 925 to 1034 (DAAREGWLQF…WIKTIQESSN (110 aa)) constitute a PH domain. Residues 1080-1120 (LGAKSEPKTQSPHSPKEESERKLLSKDDTSPPKDKGTWRRG) are disordered. A compositionally biased stretch (basic and acidic residues) spans 1093-1116 (SPKEESERKLLSKDDTSPPKDKGT). A Rho-GAP domain is found at 1141–1333 (VRLDDCPPAH…TLIQHHDWFF (193 aa)). 4 disordered regions span residues 1373-1396 (PGDVSDSATSDSAKSKGSWGSGKD), 1412-1632 (SRKR…PVFP), 1649-1794 (ARVS…LGGH), and 1846-1945 (RTSA…ETPP). Positions 1377–1395 (SDSATSDSAKSKGSWGSGK) are enriched in low complexity. A phosphoserine mark is found at Ser-1412, Ser-1426, and Ser-1427. Composition is skewed to basic and acidic residues over residues 1435 to 1457 (FFKKENTEQSHSEIKEESKRESE) and 1471 to 1488 (SNTKKDSGTTKEEKKIPW). Residue Lys-1438 forms a Glycyl lysine isopeptide (Lys-Gly) (interchain with G-Cter in SUMO) linkage. The residue at position 1504 (Thr-1504) is a Phosphothreonine. Composition is skewed to low complexity over residues 1531-1556 (SDSGTLLSTSSQASLLRSSTKKSTSP) and 1569-1589 (TTTSDYSTTSSTTYLTSLDSS). Residues 1579–1848 (STTYLTSLDS…WLARERVRTS (270 aa)) are interaction with CTNNA1. The span at 1590-1599 (RLSPEVQSVA) shows a compositional bias: polar residues. The span at 1611–1621 (SELVSEGRPVE) shows a compositional bias: basic and acidic residues. Ser-1656 is modified (phosphoserine). 2 stretches are compositionally biased toward polar residues: residues 1658-1681 (GSEASCTEGSLTPSLDSRRQQFSS) and 1729-1738 (STGSLLTPSR). The residue at position 1669 (Thr-1669) is a Phosphothreonine. Ser-1729 carries the post-translational modification Phosphoserine. Positions 1739–1757 (SESEKQEATWKTKIADRLK) are enriched in basic and acidic residues. Positions 1782-1792 (RKNIKRRHTLG) are enriched in basic residues. Positions 1871–1882 (PISTHSPPSQQP) are enriched in polar residues. Residues 1887–1896 (AATSTLASTS) show a composition bias toward low complexity. Position 1902 is a phosphothreonine (Thr-1902). Ser-1906 is subject to Phosphoserine. Positions 1907-1927 (PDQINRESFQNMSQNASSTAN) are enriched in polar residues. Basic and acidic residues predominate over residues 1932–1945 (KQSESPDTKAETPP).

Interacts with CTNNA1. Interacts with GTP-bound ARF1 and probably ARF6. Post-translationally, sumoylated with SUMO2 and SUMO3 in proliferating lymphocytes.

It is found in the golgi apparatus membrane. Its subcellular location is the cell junction. The protein resides in the cytoplasmic vesicle membrane. It localises to the cytoplasm. The protein localises to the cytoskeleton. In terms of biological role, functions as a GTPase-activating protein (GAP) for RHOA and CDC42. Downstream partner of ARF1 which may control Golgi apparatus structure and function. Also required for CTNNA1 recruitment to adherens junctions. This is Rho GTPase-activating protein 21 from Mus musculus (Mouse).